We begin with the raw amino-acid sequence, 153 residues long: Ribosome maturation factor RimP (153 aa).

The protein belongs to the RimP family.

It localises to the cytoplasm. Its function is as follows. Required for maturation of 30S ribosomal subunits. This chain is Ribosome maturation factor RimP, found in Marinobacter nauticus (strain ATCC 700491 / DSM 11845 / VT8) (Marinobacter aquaeolei).